A 131-amino-acid chain; its full sequence is Histone H2B.2 (131 aa).

A compositionally biased stretch (basic and acidic residues) spans 1–20 (MAPPKAEKKPASKAPAEKKP). Residues 1-39 (MAPPKAEKKPASKAPAEKKPAAKKTASSTDAKKRTKTRK) form a disordered region. Residues Lys-8 and Lys-9 each carry the N6-acetyllysine; alternate modification. Residues Lys-8 and Lys-9 each participate in a glycyl lysine isopeptide (Lys-Gly) (interchain with G-Cter in SUMO); alternate cross-link. Ser-12 carries the phosphoserine modification. Lys-13 carries the post-translational modification N6-acetyllysine. Residue Lys-18 is modified to N6-acetyllysine; alternate. A Glycyl lysine isopeptide (Lys-Gly) (interchain with G-Cter in SUMO); alternate cross-link involves residue Lys-18. Residue Lys-19 forms a Glycyl lysine isopeptide (Lys-Gly) (interchain with G-Cter in SUMO) linkage. Lys-125 is covalently cross-linked (Glycyl lysine isopeptide (Lys-Gly) (interchain with G-Cter in ubiquitin)).

It belongs to the histone H2B family. In terms of assembly, the nucleosome is a histone octamer containing two molecules each of H2A, H2B, H3 and H4 assembled in one H3-H4 heterotetramer and two H2A-H2B heterodimers. The octamer wraps approximately 147 bp of DNA. Post-translationally, monoubiquitinated to form H2BK123ub1. H2BK123ub1 gives a specific tag for epigenetic transcriptional activation and is also prerequisite for H3K4me and H3K79me formation. H2BK123ub1 also modulates the formation of double-strand breaks during meiosis and is a prerequisite for DNA-damage checkpoint activation. In terms of processing, phosphorylated by STE20 to form H2BS10ph during progression through meiotic prophase. May be correlated with chromosome condensation. Acetylated by GCN5 to form H2BK11ac and H2BK16ac. H2BK16ac can also be formed by ESA1. Acetylation of N-terminal lysines and particularly formation of H2BK11acK16ac has a positive effect on transcription. Post-translationally, sumoylation to form H2BK6su or H2BK7su, and probably also H2BK16su or H2BK17su, occurs preferentially near the telomeres and represses gene transcription.

Its subcellular location is the nucleus. The protein localises to the chromosome. Its function is as follows. Core component of nucleosome. Nucleosomes wrap and compact DNA into chromatin, limiting DNA accessibility to the cellular machineries which require DNA as a template. Histones thereby play a central role in transcription regulation, DNA repair, DNA replication and chromosomal stability. DNA accessibility is regulated via a complex set of post-translational modifications of histones, also called histone code, and nucleosome remodeling. In Scheffersomyces stipitis (strain ATCC 58785 / CBS 6054 / NBRC 10063 / NRRL Y-11545) (Yeast), this protein is Histone H2B.2 (HTB2).